Consider the following 509-residue polypeptide: MPSGFQQIGSEDGEPPQQRVTGTLVLAVFSAVLGSLQFGYNIGVINAPQKVIEQSYNETWLGRQGPEGPSSIPPGTLTTLWALSVAIFSVGGMISSFLIGIISQWLGRKRAMLVNNVLAVLGGSLMGLANAAASYEMLILGRFLIGAYSGLTSGLVPMYVGEIAPTHLRGALGTLNQLAIVIGILIAQVLGLESLLGTASLWPLLLGLTVLPALLQLVLLPFCPESPRYLYIIQNLEGPARKSLKRLTGWADVSGVLAELKDEKRKLERERPLSLLQLLGSRTHRQPLIIAVVLQLSQQLSGINAVFYYSTSIFETAGVGQPAYATIGAGVVNTVFTLVSVLLVERAGRRTLHLLGLAGMCGCAILMTVALLLLERVPAMSYVSIVAIFGFVAFFEIGPGPIPWFIVAELFSQGPRPAAMAVAGFSNWTSNFIIGMGFQYVAEAMGPYVFLLFAVLLLGFFIFTFLRVPETRGRTFDQISAAFHRTPSLLEQEVKPSTELEYLGPDEND.

The Cytoplasmic segment spans residues 1-24 (MPSGFQQIGSEDGEPPQQRVTGTL). Residues 7–13 (QIGSEDG) are interaction with SRFBP1. A Phosphoserine modification is found at S10. The helical transmembrane segment at 25 to 45 (VLAVFSAVLGSLQFGYNIGVI) threads the bilayer. Over 46–81 (NAPQKVIEQSYNETWLGRQGPEGPSSIPPGTLTTLW) the chain is Extracellular. N57 is a glycosylation site (N-linked (GlcNAc...) asparagine). A helical membrane pass occupies residues 82–102 (ALSVAIFSVGGMISSFLIGII). The Cytoplasmic segment spans residues 103-111 (SQWLGRKRA). A helical membrane pass occupies residues 112-132 (MLVNNVLAVLGGSLMGLANAA). Residues 133-142 (ASYEMLILGR) are Extracellular-facing. Residues 143–163 (FLIGAYSGLTSGLVPMYVGEI) traverse the membrane as a helical segment. Over 164–171 (APTHLRGA) the chain is Cytoplasmic. A helical transmembrane segment spans residues 172 to 192 (LGTLNQLAIVIGILIAQVLGL). A D-glucose-binding site is contributed by Q177. Over 193-201 (ESLLGTASL) the chain is Extracellular. A helical membrane pass occupies residues 202–222 (WPLLLGLTVLPALLQLVLLPF). Residue C223 is the site of S-palmitoyl cysteine attachment. Topologically, residues 223-287 (CPESPRYLYI…LLGSRTHRQP (65 aa)) are cytoplasmic. S274 is modified (phosphoserine; by SGK1). The chain crosses the membrane as a helical span at residues 288-308 (LIIAVVLQLSQQLSGINAVFY). D-glucose-binding positions include 298-299 (QQ) and N304. The Extracellular segment spans residues 309 to 323 (YSTSIFETAGVGQPA). The chain crosses the membrane as a helical span at residues 324–344 (YATIGAGVVNTVFTLVSVLLV). Position 333 (N333) interacts with D-glucose. At 345–353 (ERAGRRTLH) the chain is on the cytoplasmic side. The chain crosses the membrane as a helical span at residues 354-374 (LLGLAGMCGCAILMTVALLLL). Residues 375–384 (ERVPAMSYVS) are Extracellular-facing. A helical membrane pass occupies residues 385 to 405 (IVAIFGFVAFFEIGPGPIPWF). E396 and W404 together coordinate D-glucose. Residues 406 to 417 (IVAELFSQGPRP) lie on the Cytoplasmic side of the membrane. A helical membrane pass occupies residues 418 to 438 (AAMAVAGFSNWTSNFIIGMGF). Residues 439-445 (QYVAEAM) lie on the Extracellular side of the membrane. The chain crosses the membrane as a helical span at residues 446–466 (GPYVFLLFAVLLLGFFIFTFL). Residues 467–509 (RVPETRGRTFDQISAAFHRTPSLLEQEVKPSTELEYLGPDEND) are Cytoplasmic-facing. T486 carries the phosphothreonine modification. S488 carries the phosphoserine modification. A Dileucine internalization motif motif is present at residues 489–490 (LL).

This sequence belongs to the major facilitator superfamily. Sugar transporter (TC 2.A.1.1) family. Glucose transporter subfamily. Interacts with NDUFA9. Binds to DAXX. Interacts via its N-terminus with SRFBP1. Interacts with TRARG1; the interaction is required for proper SLC2A4 recycling after insulin stimulation. Post-translationally, sumoylated. In terms of processing, palmitoylated. Palmitoylation by ZDHHC7 controls the insulin-dependent translocation of GLUT4 to the plasma membrane. Skeletal and cardiac muscles; brown and white fat.

It is found in the cell membrane. The protein resides in the endomembrane system. Its subcellular location is the cytoplasm. The protein localises to the perinuclear region. It catalyses the reaction D-glucose(out) = D-glucose(in). Its function is as follows. Insulin-regulated facilitative glucose transporter, which plays a key role in removal of glucose from circulation. Response to insulin is regulated by its intracellular localization: in the absence of insulin, it is efficiently retained intracellularly within storage compartments in muscle and fat cells. Upon insulin stimulation, translocates from these compartments to the cell surface where it transports glucose from the extracellular milieu into the cell. The polypeptide is Solute carrier family 2, facilitated glucose transporter member 4 (Homo sapiens (Human)).